The following is a 336-amino-acid chain: MEKLFIPKDYKPLLSLRETEVAIKELKDFFEDSLAKNLNLTRVSAPLFVNKGSGLNDDLNGIERPVSFDMKAIPEFNIQIVHSLAKWKRLALHRYEFKHGEGLYTDMNAIRRDEDLDNIHSIYVDQWDWEKIIDKEERNLETLKETVRSIYSTFKATEDFIVSKYPHIEKILPEDITFITSQELEDRYPDLTSKERETAICKEFGAVFIIGIGGKLASGEKHDDRSPDYDDWTLNGDLLFYYPLFDEAVELSSMGIRVDEESLLKQLKIAECEERKELPFHQMLLEGKLPYTIGGGIGQSRICMFFLRKAHIGEVQASMWDEDMIRTCEENNIHLL.

Belongs to the class-II aminoacyl-tRNA synthetase family. AsnA subfamily.

It is found in the cytoplasm. It carries out the reaction L-aspartate + NH4(+) + ATP = L-asparagine + AMP + diphosphate + H(+). The protein operates within amino-acid biosynthesis; L-asparagine biosynthesis; L-asparagine from L-aspartate (ammonia route): step 1/1. This chain is Aspartate--ammonia ligase, found in Clostridium perfringens (strain SM101 / Type A).